The following is a 111-amino-acid chain: N-alpha-acetyltransferase 38-B, NatC auxiliary subunit (111 aa).

In terms of domain architecture, Sm spans 28–106 (TARHKLESLL…IVSIQVELET (79 aa)).

It belongs to the snRNP Sm proteins family. In terms of assembly, component of the N-terminal acetyltransferase C (NatC) complex, which is composed of naa35, naa38 and naa30.

It localises to the cytoplasm. In terms of biological role, auxillary component of the N-terminal acetyltransferase C (NatC) complex which catalyzes acetylation of N-terminal methionine residues. The polypeptide is N-alpha-acetyltransferase 38-B, NatC auxiliary subunit (naa38-b) (Xenopus laevis (African clawed frog)).